The chain runs to 605 residues: DNA primase (605 aa).

A CHC2-type zinc finger spans residues 39–63 (CPFHHERTPSFHVVPDKKMYYCFGC). A Toprim domain is found at 257 to 338 (RAAIICEGYM…EVRIVELNGG (82 aa)). The Mg(2+) site is built by E263, D307, and D309.

The protein belongs to the DnaG primase family. In terms of assembly, monomer. Interacts with DnaB. Requires Zn(2+) as cofactor. It depends on Mg(2+) as a cofactor.

The catalysed reaction is ssDNA + n NTP = ssDNA/pppN(pN)n-1 hybrid + (n-1) diphosphate.. Functionally, RNA polymerase that catalyzes the synthesis of short RNA molecules used as primers for DNA polymerase during DNA replication. This chain is DNA primase, found in Treponema pallidum (strain Nichols).